A 561-amino-acid polypeptide reads, in one-letter code: MVSKRKSRTSKTIEDSCIHLCSVFFRFLYYTLPALFLFFFLLYLCLSFTTGISYNNFHMCIFSRKFNDPYCNTAGSKPGFQIISEENVTFAGEIAGDRVSKDHNKILNSVPVQEHKTKNKVDLNSLIELKAEEEYSKYIKPTSEDEGYALRAAIKYLYLQRSWLSPGDENLNKPRSCEGKGVYVYDLPSKFNSDLLVGCNDILPGVNLCSYFKNEGFGEAIKNLGKGWFATHMYSLEPILHSRVLKHPCRVYNETQAKLFFVPYYGGYDVLRWHYRNVSEDVKDRLGIEVLKWLNSKESWRRNAGKDHVFVLGKITWDFRRDKDPWGSRFLELQEMQNPTKLLIERQPWQVNDIAIPHPTYFHPRTDDDITRWQIKIMSKLRRNLVSFAGGARPDNPNNIRSTLIEQCISSNQCRFLNCTNESCTNPKNVLDLFQDSEFCLQPPGDSATRRSVFDSLISGCIPVIFTPYTAYYQYAWHLPEDHRKYSVYISEQDVKEKRVNVVEILKAKTLKEKKDMKSYIVQQLLPGLVYGDSNAKFEKFRDAFDITFDCLLKKINRSVV.

The Cytoplasmic portion of the chain corresponds to 1–31 (MVSKRKSRTSKTIEDSCIHLCSVFFRFLYYT). A helical; Signal-anchor for type II membrane protein membrane pass occupies residues 32-52 (LPALFLFFFLLYLCLSFTTGI). Over 53–561 (SYNNFHMCIF…LLKKINRSVV (509 aa)) the chain is Lumenal. 6 N-linked (GlcNAc...) asparagine glycosylation sites follow: asparagine 87, asparagine 253, asparagine 277, asparagine 418, asparagine 421, and asparagine 557.

This sequence belongs to the glycosyltransferase 47 family. As to expression, expressed in hydathodes.

Its subcellular location is the golgi apparatus membrane. In terms of biological role, functions in xyloglucan synthesis by adding side chains to the xylosylated glucan backbone. Involved in the galactosylation of hemicellulose xyloglucan. The sequence is that of Probable xyloglucan galactosyltransferase GT20 from Arabidopsis thaliana (Mouse-ear cress).